The sequence spans 250 residues: MRKPMVAGNWKMNGSLALVNDMGRALADVDCSAVDVLVCPPFPYIGPLRRAVPDESGVALGGQDVSRYDSGAYTGEVAGAMLAEMGCRHVIVGHSERRAMHAETDEVVVDKVQAALRAGLTPIVCVGETLEARDAGETEQVVGRQLDAVLELGGFVVEKLVLAYEPVWAIGTGRTASPEQAQAVHAFIRQRAADALGDELAQRLPILYGGSVKPGNARELFGCADVDGGLIGGASLDPDGFLEIISAARP.

9–11 (NWK) is a substrate binding site. His94 serves as the catalytic Electrophile. Glu165 (proton acceptor) is an active-site residue. Residues Gly171, Ser211, and 232–233 (GG) each bind substrate.

It belongs to the triosephosphate isomerase family. In terms of assembly, homodimer.

Its subcellular location is the cytoplasm. The enzyme catalyses D-glyceraldehyde 3-phosphate = dihydroxyacetone phosphate. It functions in the pathway carbohydrate biosynthesis; gluconeogenesis. The protein operates within carbohydrate degradation; glycolysis; D-glyceraldehyde 3-phosphate from glycerone phosphate: step 1/1. In terms of biological role, involved in the gluconeogenesis. Catalyzes stereospecifically the conversion of dihydroxyacetone phosphate (DHAP) to D-glyceraldehyde-3-phosphate (G3P). In Alkalilimnicola ehrlichii (strain ATCC BAA-1101 / DSM 17681 / MLHE-1), this protein is Triosephosphate isomerase.